Consider the following 311-residue polypeptide: Ribonuclease HIII (311 aa).

The RNase H type-2 domain maps to 95 to 311 (MSIVGSDEVG…NTEKAFRLLK (217 aa)). A divalent metal cation-binding residues include Asp-101, Glu-102, and Asp-206.

The protein belongs to the RNase HII family. RnhC subfamily. It depends on Mn(2+) as a cofactor. The cofactor is Mg(2+).

The protein resides in the cytoplasm. The enzyme catalyses Endonucleolytic cleavage to 5'-phosphomonoester.. Endonuclease that specifically degrades the RNA of RNA-DNA hybrids. This chain is Ribonuclease HIII, found in Bacillus cereus (strain 03BB102).